The primary structure comprises 266 residues: Respiratory nitrate reductase beta chain (266 aa).

2 4Fe-4S ferredoxin-type domains span residues 3 to 32 (VGMVLNLDKCIGCHTCSVTCKEGMEYAWFN) and 30 to 61 (WFNNVESKLCEHCLNPACVATCPSGAIYKREE). Positions 12, 15, 18, 22, 39, 42, and 47 each coordinate [4Fe-4S] cluster. Residues Cys51 and Cys73 each coordinate [3Fe-4S] cluster. The [4Fe-4S] cluster site is built by Cys77, Cys81, Cys84, Cys96, and Cys100.

In terms of assembly, heterotrimer composed of an alpha, a beta and a gamma chain. Alpha and beta are catalytic chains; gamma chains are involved in binding the enzyme complex to the cytoplasmic membrane. [4Fe-4S] cluster serves as cofactor. Requires [3Fe-4S] cluster as cofactor.

Its subcellular location is the cell membrane. The protein resides in the cytoplasm. The catalysed reaction is nitrate + a quinol = a quinone + nitrite + H2O. Inhibited by micromolar concentrations of azide. Functionally, the nitrate reductase enzyme complex allows Bradyrhizobium sp. USDA 3045 to use nitrate as an electron acceptor during anaerobic growth. The beta chain is an electron transfer unit containing four cysteine clusters involved in the formation of iron-sulfur centers. Electrons are transferred from the gamma chain to the molybdenum cofactor of the alpha subunit. This Bradyrhizobium sp protein is Respiratory nitrate reductase beta chain (narH).